The following is a 633-amino-acid chain: Proline-rich receptor-like protein kinase PERK4 (633 aa).

The span at 1–29 shows a compositional bias: low complexity; it reads MASSPESAPPTNSTSSPSPPSNTNSTTSS. Residues 1-145 form a disordered region; the sequence is MASSPESAPP…GSSGGGGGGR (145 aa). Over 1–151 the chain is Extracellular; that stretch reads MASSPESAPP…GGGRSNTNTA (151 aa). N-linked (GlcNAc...) asparagine glycans are attached at residues N12 and N24. 2 stretches are compositionally biased toward pro residues: residues 30–41 and 48–65; these read PPAPSPPSPTPP and SPPP…PNPP. A glycan (N-linked (GlcNAc...) asparagine) is linked at N66. Residues 77-90 show a composition bias toward gly residues; it reads QGGGGERGNGGNNG. Residues 106 to 135 are compositionally biased toward low complexity; sequence SRSNGDNGGSRSSPPGDTGGSRSDNPPSSG. Residues 136-145 show a composition bias toward gly residues; sequence GSSGGGGGGR. A helical transmembrane segment spans residues 152 to 172; the sequence is IIVGVLVGAGLLMIVLIIVCL. The Cytoplasmic segment spans residues 173–633; the sequence is RRKKKRKDSF…MGTKSPTPPK (461 aa). Over residues 193-222 the composition is skewed to low complexity; sequence QYYGNNNNNNASQNYPNWHLNSQGQNQQST. Positions 193–255 are disordered; the sequence is QYYGNNNNNN…SMYSGPSRPV (63 aa). At T273 the chain carries Phosphothreonine. In terms of domain architecture, Protein kinase spans 284-562; that stretch reads FTDANLLGQG…VRALEGEVSL (279 aa). ATP-binding positions include 290–298 and K312; that span reads LGQGGFGYV. Y357 bears the Phosphotyrosine mark. The active-site Proton acceptor is the D408. S441 bears the Phosphoserine mark. A phosphothreonine mark is found at T442 and T447. A Phosphotyrosine modification is found at Y455. The span at 608–619 shows a compositional bias: polar residues; that stretch reads FPVSDCEGTSSN. Residues 608-633 are disordered; sequence FPVSDCEGTSSNDSRDMGTKSPTPPK.

This sequence belongs to the protein kinase superfamily. Ser/Thr protein kinase family. In terms of tissue distribution, mostly expressed in inflorescence bolts. Also present in roots, stems, germinated seeds, cotyledons, pollen, stamen and stigma.

The protein resides in the cell membrane. The enzyme catalyses L-seryl-[protein] + ATP = O-phospho-L-seryl-[protein] + ADP + H(+). It catalyses the reaction L-threonyl-[protein] + ATP = O-phospho-L-threonyl-[protein] + ADP + H(+). Its activity is regulated as follows. Activated by ABA and Ca(2+). Required during abscisic acid (ABA)-mediated activation of Ca(2+) channels. Regulates ABA signaling pathways. Modulates the expression of genes related to cell elongation and ABA signaling during root growth. The polypeptide is Proline-rich receptor-like protein kinase PERK4 (PERK4) (Arabidopsis thaliana (Mouse-ear cress)).